The sequence spans 499 residues: Lysine--tRNA ligase (499 aa).

2 residues coordinate Mg(2+): Glu408 and Glu415.

This sequence belongs to the class-II aminoacyl-tRNA synthetase family. As to quaternary structure, homodimer. Mg(2+) is required as a cofactor.

The protein resides in the cytoplasm. It catalyses the reaction tRNA(Lys) + L-lysine + ATP = L-lysyl-tRNA(Lys) + AMP + diphosphate. This is Lysine--tRNA ligase from Bacillus cereus (strain B4264).